The sequence spans 377 residues: Guanine nucleotide-binding protein subunit alpha-13 (377 aa).

Residues cysteine 14 and cysteine 18 are each lipidated (S-palmitoyl cysteine). Positions 47-377 constitute a G-alpha domain; the sequence is RLVKILLLGA…HDNLKQLMLQ (331 aa). Positions 50 to 63 are G1 motif; it reads KILLLGAGESGKST. GTP-binding positions include 58–63, serine 173, and 197–200; these read ESGKST and LLAR. Residue serine 62 coordinates Mg(2+). Positions 195–203 are G2 motif; it reads DILLARRPT. Threonine 203 lines the Mg(2+) pocket. Threonine 203 is modified (phosphothreonine). A G3 motif region spans residues 218–227; the sequence is FKMVDVGGQR. The interval 287-294 is G4 motif; sequence ILFLNKTD. GTP contacts are provided by residues 291–294 and alanine 349; that span reads NKTD. The interval 347–352 is G5 motif; the sequence is TTAINT.

It belongs to the G-alpha family. G(12) subfamily. In terms of assembly, g proteins are composed of 3 units; alpha, beta and gamma. The alpha chain contains the guanine nucleotide binding site. Interacts with UBXD5. Interacts with HAX1. Interacts (in GTP-bound form) with PPP5C (via TPR repeats); activates PPP5C phosphatase activity and translocates PPP5C to the cell membrane. Interacts with RGS22. Interacts (in GTP-bound form) with ARHGEF1. Interacts (in GTP-bound form) with ARHGEF11 (via RGS domain). Interacts (in GTP-bound form) with ARHGEF12 (via RGS domain). Interacts with CTNND1. Interacts with GAS2L2. Interacts with GPR35. Interacts with GPR174. Post-translationally, phosphorylation on Thr-203 destabilizes the heterotrimer of alpha, beta and gamma, and inhibits Rho activation. Expressed in brain and testis, as well as in kidney and sperm (at protein level).

Its subcellular location is the membrane. It localises to the melanosome. The protein resides in the cytoplasm. It is found in the nucleus. Functionally, guanine nucleotide-binding proteins (G proteins) are involved as modulators or transducers in various transmembrane signaling systems. Activates effector molecule RhoA by binding and activating RhoGEFs (ARHGEF1/p115RhoGEF, ARHGEF11/PDZ-RhoGEF and ARHGEF12/LARG). GNA13-dependent Rho signaling subsequently regulates transcription factor AP-1 (activating protein-1). Promotes tumor cell invasion and metastasis by activating Rho/ROCK signaling pathway. Inhibits CDH1-mediated cell adhesion in a process independent from Rho activation. In lymphoid follicles, transmits P2RY8- and S1PR2-dependent signals that lead to inhibition of germinal center (GC) B cell growth and migration outside the GC niche. The chain is Guanine nucleotide-binding protein subunit alpha-13 (Gna13) from Mus musculus (Mouse).